The following is a 166-amino-acid chain: Small ribosomal subunit protein uS5 (166 aa).

One can recognise an S5 DRBM domain in the interval 11 to 74; it reads LEDRVVAINR…EDAKKNLVEV (64 aa).

The protein belongs to the universal ribosomal protein uS5 family. As to quaternary structure, part of the 30S ribosomal subunit. Contacts proteins S4 and S8.

In terms of biological role, with S4 and S12 plays an important role in translational accuracy. Functionally, located at the back of the 30S subunit body where it stabilizes the conformation of the head with respect to the body. In Enterococcus faecalis (strain ATCC 700802 / V583), this protein is Small ribosomal subunit protein uS5.